Here is a 321-residue protein sequence, read N- to C-terminus: Ubiquitin-conjugating enzyme E2 U (321 aa).

One can recognise a UBC core domain in the interval 4-153 (RAYLLLHRDF…LRLFNRPLQM (150 aa)). The Glycyl thioester intermediate role is filled by Cys-89. Residues 285 to 321 (WKSDTSLYENDTDEPREEEVEDLISWTNTLNTNTSED) form a disordered region. Acidic residues predominate over residues 294-306 (NDTDEPREEEVED). The segment covering 309–321 (SWTNTLNTNTSED) has biased composition (polar residues).

This sequence belongs to the ubiquitin-conjugating enzyme family. Autoubiquitinated in vitro in the presence of UBR5.

It carries out the reaction S-ubiquitinyl-[E1 ubiquitin-activating enzyme]-L-cysteine + [E2 ubiquitin-conjugating enzyme]-L-cysteine = [E1 ubiquitin-activating enzyme]-L-cysteine + S-ubiquitinyl-[E2 ubiquitin-conjugating enzyme]-L-cysteine.. Its pathway is protein modification; protein ubiquitination. Catalyzes the covalent attachment of ubiquitin to other proteins. The sequence is that of Ubiquitin-conjugating enzyme E2 U (UBE2U) from Homo sapiens (Human).